We begin with the raw amino-acid sequence, 216 residues long: 2-phospho-L-lactate guanylyltransferase (216 aa).

Belongs to the CofC family. In terms of assembly, homodimer.

The enzyme catalyses (2S)-2-phospholactate + GTP + H(+) = (2S)-lactyl-2-diphospho-5'-guanosine + diphosphate. The protein operates within cofactor biosynthesis; coenzyme F420 biosynthesis. Guanylyltransferase that catalyzes the activation of (2S)-2-phospholactate (2-PL) as (2S)-lactyl-2-diphospho-5'-guanosine, via the condensation of 2-PL with GTP. It is involved in the biosynthesis of coenzyme F420, a hydride carrier cofactor. The polypeptide is 2-phospho-L-lactate guanylyltransferase (Methanocaldococcus infernus (strain DSM 11812 / JCM 15783 / ME)).